We begin with the raw amino-acid sequence, 247 residues long: Carboxy-S-adenosyl-L-methionine synthase (247 aa).

S-adenosyl-L-methionine contacts are provided by residues tyrosine 40, 65–67, 90–91, 122–123, asparagine 137, and arginine 204; these read GSS, DN, and DI.

It belongs to the class I-like SAM-binding methyltransferase superfamily. Cx-SAM synthase family. As to quaternary structure, homodimer.

The enzyme catalyses prephenate + S-adenosyl-L-methionine = carboxy-S-adenosyl-L-methionine + 3-phenylpyruvate + H2O. Functionally, catalyzes the conversion of S-adenosyl-L-methionine (SAM) to carboxy-S-adenosyl-L-methionine (Cx-SAM). The polypeptide is Carboxy-S-adenosyl-L-methionine synthase (Pseudomonas fluorescens (strain ATCC BAA-477 / NRRL B-23932 / Pf-5)).